We begin with the raw amino-acid sequence, 85 residues long: Ice-structuring protein 4 (85 aa).

An N-terminal signal peptide occupies residues 1–21 (MRITEANPDPDAKAVPAAAAP).

Belongs to the type-I AFP family.

The protein localises to the secreted. Contributes to protect fish blood from freezing at subzero sea water temperatures. Lowers the blood freezing point. Binds to nascent ice crystals and prevents further growth. This chain is Ice-structuring protein 4, found in Pseudopleuronectes americanus (Winter flounder).